The primary structure comprises 371 residues: Dihydroorotate dehydrogenase (quinone) (371 aa).

FMN contacts are provided by residues 79–83 and Thr103; that span reads AGFDK. Lys83 contributes to the substrate binding site. 128–132 lines the substrate pocket; that stretch reads NRMGF. FMN contacts are provided by Asn156 and Asn189. Residue Asn189 coordinates substrate. Ser192 acts as the Nucleophile in catalysis. Asn194 serves as a coordination point for substrate. 2 residues coordinate FMN: Lys225 and Thr253. Substrate is bound at residue 254 to 255; it reads NT. FMN-binding positions include Gly279, Gly308, and 329–330; that span reads YT.

The protein belongs to the dihydroorotate dehydrogenase family. Type 2 subfamily. As to quaternary structure, monomer. Requires FMN as cofactor.

It is found in the cell membrane. The enzyme catalyses (S)-dihydroorotate + a quinone = orotate + a quinol. It functions in the pathway pyrimidine metabolism; UMP biosynthesis via de novo pathway; orotate from (S)-dihydroorotate (quinone route): step 1/1. Functionally, catalyzes the conversion of dihydroorotate to orotate with quinone as electron acceptor. The sequence is that of Dihydroorotate dehydrogenase (quinone) from Corynebacterium glutamicum (strain ATCC 13032 / DSM 20300 / JCM 1318 / BCRC 11384 / CCUG 27702 / LMG 3730 / NBRC 12168 / NCIMB 10025 / NRRL B-2784 / 534).